The primary structure comprises 363 residues: MMNEEDSTETKSLVITNGMFIIDDIERSKYNIHYKNVPGGGGTFAILGACIISSGNVTSKGLKWIVDRGSDFPKEVIREIDSWGTDVRFRDDFSRLTTKGLNYYEGSDDLRKFKFLTPKKQINVDDWISTFGQKIIDEMHAFHLLCSGSRCLDIINDLLRVKSSKGTKPIVIWEPFPDLCDFDHQNDIKSVMQRNDVTVILSPNAEESSRLFGLSSKEPTSLEECLALAHRFDDFMDENNMCILRCGALGSISVSEKFKNGRTYDHFPAYHFKTQSKVLDPTGGGNSFLGGFAVSYALTKSLDIASICGNIAAGAIIEQFGIPRYDPIAKTWNGITFLDRLKFYLSQSGLQYNINDLYKSLTR.

This sequence to S.pombe SpAC4G8.14c.

Necessary for the structural stability of L-A double-stranded RNA-containing particles. Necessary for growth at 37 degrees Celsius as well as for maintenance of the killer plasmid. This is Protein MAK32 (MAK32) from Saccharomyces cerevisiae (strain ATCC 204508 / S288c) (Baker's yeast).